Consider the following 200-residue polypeptide: Histone chaperone asf1a-B (200 aa).

Belongs to the ASF1 family. As to quaternary structure, interacts with histone H3 (including both histone H3.1 and H3.3) and histone H4.

It is found in the nucleus. Its function is as follows. Histone chaperone that facilitates histone deposition and histone exchange and removal during nucleosome assembly and disassembly. The protein is Histone chaperone asf1a-B (asf1ab) of Xenopus laevis (African clawed frog).